Here is a 172-residue protein sequence, read N- to C-terminus: Protein GrpE (172 aa).

Positions 1–23 (MNQDHPEFDSEDLSQNPPETDPL) are disordered.

The protein belongs to the GrpE family. As to quaternary structure, homodimer.

The protein resides in the cytoplasm. Its function is as follows. Participates actively in the response to hyperosmotic and heat shock by preventing the aggregation of stress-denatured proteins, in association with DnaK and GrpE. It is the nucleotide exchange factor for DnaK and may function as a thermosensor. Unfolded proteins bind initially to DnaJ; upon interaction with the DnaJ-bound protein, DnaK hydrolyzes its bound ATP, resulting in the formation of a stable complex. GrpE releases ADP from DnaK; ATP binding to DnaK triggers the release of the substrate protein, thus completing the reaction cycle. Several rounds of ATP-dependent interactions between DnaJ, DnaK and GrpE are required for fully efficient folding. This Xanthomonas axonopodis pv. citri (strain 306) protein is Protein GrpE.